The chain runs to 289 residues: Elongation factor Ts (289 aa).

An involved in Mg(2+) ion dislocation from EF-Tu region spans residues 82-85 (TDFL).

The protein belongs to the EF-Ts family.

The protein resides in the cytoplasm. Functionally, associates with the EF-Tu.GDP complex and induces the exchange of GDP to GTP. It remains bound to the aminoacyl-tRNA.EF-Tu.GTP complex up to the GTP hydrolysis stage on the ribosome. The sequence is that of Elongation factor Ts from Pseudomonas aeruginosa (strain LESB58).